The sequence spans 238 residues: Monocyte to macrophage differentiation factor (238 aa).

At 1 to 28 (MRFRNRFQRFMNHRAPANGRYKPTCYEH) the chain is on the cytoplasmic side. Residues 29 to 49 (AANCYTHAFLIVPAIVGSALL) form a helical membrane-spanning segment. Residues 50–61 (HRLSDDCWEKIT) are Lumenal-facing. Residues 62–82 (AWIYGMGLCALFIVSTVFHIV) traverse the membrane as a helical segment. Topologically, residues 83–101 (SWKKSHLRTVEHCFHMCDR) are cytoplasmic. A helical membrane pass occupies residues 102–122 (MVIYFFIAASYAPWLNLRELG). A topological domain (lumenal) is located at residue proline 123. Residues 124 to 144 (LASHMRWFIWLMAAGGTIYVF) traverse the membrane as a helical segment. The Cytoplasmic portion of the chain corresponds to 145-151 (LYHEKYK). Residues 152–172 (VVELFFYLTMGFSPALVVTSM) form a helical membrane-spanning segment. The Lumenal segment spans residues 173–174 (NN). Residues 175–195 (TDGLQELACGGLIYCLGVVFF) traverse the membrane as a helical segment. Over 196 to 198 (KSD) the chain is Cytoplasmic. A helical transmembrane segment spans residues 199-219 (GIIPFAHAIWHLFVATAAAVH). Over 220-238 (YYAIWKYLYRSPTDFIRHL) the chain is Lumenal.

It belongs to the ADIPOR family.

Its subcellular location is the late endosome membrane. It localises to the lysosome membrane. Its function is as follows. Involved in the dynamics of lysosomal membranes associated with microglial activation following brain lesion. This is Monocyte to macrophage differentiation factor from Mus musculus (Mouse).